Reading from the N-terminus, the 415-residue chain is MLRFLKPFPLRFGKRFYSKVPPVTNHERILPKQPSFPTAPAQNEIATLTIRNGPIFHGTSFGANRNVSGEAVFTTSPVGYVESLTDPSYKQQILIFTQPLIGNYGVPDCKKRDENGLLRHFESPHIQCAGVVVNDYATKYSHWTAVESLGEWCAREGVAAITGVDTRAIVTFLREQGSSLAKISIGEEYDANDDEAFINPEEVNLVSQVSTREPFFVSGGDGMLNIAVIDCGVKENILRSLVSRGASVTVFPFDYPIQNVASNYDGIFLTNGPGDPTHLTKTVNNLRELMNTYNGPIMGICMGHQLLALSTGAKTIKLKYGNRGHNIPALDIASGNCHITSQNHGYAVDASTLPAEWKATWTNLNDQSNEGIAHVSRPISSVQFHPEARGGPMDTFYLFDNYIKEAIKYQKSRTA.

The transit peptide at 1–17 (MLRFLKPFPLRFGKRFY) directs the protein to the mitochondrion. The L-glutamine site is built by Ser-88, Gly-272, and Gly-274. Residues 225–412 (NIAVIDCGVK…IKEAIKYQKS (188 aa)) form the Glutamine amidotransferase type-1 domain. Cys-301 functions as the Nucleophile in the catalytic mechanism. Residues Met-302, Gln-305, Asn-343, Gly-345, and Tyr-346 each contribute to the L-glutamine site. Catalysis depends on residues His-385 and Glu-387.

This sequence belongs to the CarA family. In terms of assembly, heterodimer composed of 2 chains; the small (or glutamine) chain promotes the hydrolysis of glutamine to ammonia, which is used by the large (or ammonia) chain to synthesize carbamoyl phosphate.

It localises to the mitochondrion. The protein resides in the cytoplasm. It carries out the reaction hydrogencarbonate + L-glutamine + 2 ATP + H2O = carbamoyl phosphate + L-glutamate + 2 ADP + phosphate + 2 H(+). The enzyme catalyses L-glutamine + H2O = L-glutamate + NH4(+). It functions in the pathway amino-acid biosynthesis; L-arginine biosynthesis; carbamoyl phosphate from bicarbonate: step 1/1. Functionally, small subunit of the arginine-specific carbamoyl phosphate synthase (CPSase). CPSase catalyzes the formation of carbamoyl phosphate from the ammonia moiety of glutamine, carbonate, and phosphate donated by ATP, the first step of the arginine biosynthetic pathway. The small subunit (glutamine amidotransferase) binds and cleaves glutamine to supply the large subunit with the substrate ammonia. This is Carbamoyl phosphate synthase arginine-specific small chain (arg5) from Schizosaccharomyces pombe (strain 972 / ATCC 24843) (Fission yeast).